A 357-amino-acid polypeptide reads, in one-letter code: Histidinol-phosphate aminotransferase (357 aa).

N6-(pyridoxal phosphate)lysine is present on Lys-212.

It belongs to the class-II pyridoxal-phosphate-dependent aminotransferase family. Histidinol-phosphate aminotransferase subfamily. Homodimer. Pyridoxal 5'-phosphate serves as cofactor.

It catalyses the reaction L-histidinol phosphate + 2-oxoglutarate = 3-(imidazol-4-yl)-2-oxopropyl phosphate + L-glutamate. It participates in amino-acid biosynthesis; L-histidine biosynthesis; L-histidine from 5-phospho-alpha-D-ribose 1-diphosphate: step 7/9. This is Histidinol-phosphate aminotransferase from Pectobacterium atrosepticum (strain SCRI 1043 / ATCC BAA-672) (Erwinia carotovora subsp. atroseptica).